We begin with the raw amino-acid sequence, 149 residues long: Ribosome-binding factor A (149 aa).

It belongs to the RbfA family. In terms of assembly, monomer. Binds 30S ribosomal subunits, but not 50S ribosomal subunits or 70S ribosomes.

It is found in the cytoplasm. One of several proteins that assist in the late maturation steps of the functional core of the 30S ribosomal subunit. Associates with free 30S ribosomal subunits (but not with 30S subunits that are part of 70S ribosomes or polysomes). Required for efficient processing of 16S rRNA. May interact with the 5'-terminal helix region of 16S rRNA. This chain is Ribosome-binding factor A, found in Caulobacter vibrioides (strain ATCC 19089 / CIP 103742 / CB 15) (Caulobacter crescentus).